Here is a 460-residue protein sequence, read N- to C-terminus: Interleukin-6 receptor subunit alpha (460 aa).

The N-terminal stretch at 1–19 (MLTVGCTLLVALLAAPAVA) is a signal peptide. Residues 20-116 (LVLGSCRALE…DVPPEEPKLS (97 aa)) enclose the Ig-like C2-type domain. Residues 20–364 (LVLGSCRALE…VQESSSMSLP (345 aa)) are Extracellular-facing. Intrachain disulfides connect cysteine 25-cysteine 190, cysteine 47-cysteine 92, cysteine 117-cysteine 128, and cysteine 162-cysteine 173. 2 N-linked (GlcNAc...) asparagine glycosylation sites follow: asparagine 32 and asparagine 55. 2 consecutive Fibronectin type-III domains span residues 109-214 (PPEE…VQPD) and 215-313 (PPAN…TPWI). Residue asparagine 150 is glycosylated (N-linked (GlcNAc...) asparagine). Residue asparagine 218 is glycosylated (N-linked (GlcNAc...) asparagine). The short motif at 300–304 (WSEWS) is the WSXWS motif element. Residues 365 to 385 (TFLVAGGSLAFGLLLCVFIIL) form a helical membrane-spanning segment. The Cytoplasmic segment spans residues 386-460 (RLKQKWKSEA…NSNRDYLFPR (75 aa)).

The protein belongs to the type I cytokine receptor family. Type 3 subfamily. As to quaternary structure, component of a hexamer of two molecules each of IL6, IL6R and IL6ST; first binds to IL6 to associate with the signaling subunit IL6ST. Interacts (via N-terminal ectodomain) with SORL1; this interaction may affect IL6-binding to IL6R, hence decrease IL6 'classic-signaling'. Also interacts with SORL1; this interaction leads to soluble IL6R internalization. May form a trimeric complex with the soluble SORL1 ectodomain and circulating IL6 receptor; this interaction might stabilize circulating IL6, hence promote IL6 'trans-signaling'. In terms of processing, a short soluble form is also released from the membrane by proteolysis. The sIL6R is formed by limited proteolysis of membrane-bound receptors, a process referred to as ectodomain shedding. mIL6R is cleaved by the proteases ADAM10 and ADAM17. Post-translationally, glycosylated. Glycosylation is dispensable for transport, signaling, and cell-surface turnover. Glycosylation at Asn-55 is a protease-regulatory exosite. Glycosylation is required for ADAM17-mediated proteolysis. As to expression, expressed by dendritic cells. In terms of tissue distribution, detected in the cerebrospinal fluid.

The protein resides in the cell membrane. It is found in the secreted. Classic and trans-signaling are both inhibited by tocilizumab, a humanized monoclonal antibody that blocks interleukin IL6R signaling. Its function is as follows. Part of the receptor for interleukin 6. Binds to IL6 with low affinity, but does not transduce a signal. Signal activation necessitate an association with IL6ST. Activation leads to the regulation of the immune response, acute-phase reactions and hematopoiesis. The interaction with membrane-bound IL6R and IL6ST stimulates 'classic signaling', the restricted expression of the IL6R limits classic IL6 signaling to only a few tissues such as the liver and some cells of the immune system. Whereas the binding of IL6 and soluble IL6R to IL6ST stimulates 'trans-signaling'. Alternatively, 'cluster signaling' occurs when membrane-bound IL6:IL6R complexes on transmitter cells activate IL6ST receptors on neighboring receiver cells. Signaling via the membrane-bound IL6R is mostly regenerative and anti-inflammatory. Drives naive CD4(+) T cells to the Th17 lineage, through 'cluster signaling' by dendritic cells. Functionally, soluble form of IL6 receptor (sIL6R) that acts as an agonist of IL6 activity. The IL6:sIL6R complex (hyper-IL6) binds to IL6ST/gp130 on cell surfaces and induces signaling also on cells that do not express membrane-bound IL6R in a process called IL6 'trans-signaling'. sIL6R is causative for the pro-inflammatory properties of IL6 and an important player in the development of chronic inflammatory diseases. In complex with IL6, is required for induction of VEGF production. Plays a protective role during liver injury, being required for maintenance of tissue regeneration. 'Trans-signaling' in central nervous system regulates energy and glucose homeostasis. The chain is Interleukin-6 receptor subunit alpha from Mus musculus (Mouse).